A 181-amino-acid chain; its full sequence is Histone deacetylase complex subunit SAP30L-A (181 aa).

Cystine bridges form between cysteine 26/cysteine 27 and cysteine 35/cysteine 71. The Atypical zinc finger occupies 26–74 (CCLIDGGERCPRPAGNASFSKRVQKSISQKKLKLDIDKNVRHLYICDFH). Residues 82–103 (RNKRKRKTSDDGGDSPEHETDI) are disordered. Residues 83–88 (NKRKRK) carry the Nuclear localization signal (NLS) motif. Positions 85–87 (RKR) are important for DNA and phosphoinositide binding.

Belongs to the SAP30 family. Interacts with components of the histone deacetylase complex sin3a, hdac1 and hdac2. Binds histones and nucleosomes.

The protein resides in the nucleus. Its subcellular location is the nucleolus. Functions as a transcription repressor, probably via its interaction with histone deacetylase complexes. Involved in the functional recruitment of the class 1 Sin3-histone deacetylase complex (HDAC) to the nucleolus. Binds DNA, apparently without sequence-specificity, and bends bound double-stranded DNA. Binds phosphoinositol phosphates (phosphoinositol 3-phosphate, phosphoinositol 4-phosphate and phosphoinositol 5-phosphate) via the same basic sequence motif that mediates DNA binding and nuclear import. This is Histone deacetylase complex subunit SAP30L-A (sap30l-a) from Xenopus laevis (African clawed frog).